A 265-amino-acid chain; its full sequence is tRNA pseudouridine synthase A (265 aa).

Aspartate 58 (nucleophile) is an active-site residue. Tyrosine 116 serves as a coordination point for substrate.

This sequence belongs to the tRNA pseudouridine synthase TruA family. In terms of assembly, homodimer.

It catalyses the reaction uridine(38/39/40) in tRNA = pseudouridine(38/39/40) in tRNA. Formation of pseudouridine at positions 38, 39 and 40 in the anticodon stem and loop of transfer RNAs. The sequence is that of tRNA pseudouridine synthase A from Neisseria gonorrhoeae (strain ATCC 700825 / FA 1090).